Consider the following 78-residue polypeptide: Dermaseptin-B1 (78 aa).

Residues 1–22 (MDILKKSLFLVLFLGLVSLSIC) form the signal peptide. The propeptide occupies 23 to 42 (EEEKRENEDEEKQDDEQSEM). Gln-75 is subject to Glutamine amide. The propeptide occupies 76-78 (GEQ).

The protein belongs to the frog skin active peptide (FSAP) family. Dermaseptin subfamily. In terms of tissue distribution, expressed by the skin glands.

It localises to the secreted. Its function is as follows. Possesses a potent antimicrobial activity against bacteria, fungi and protozoa. Probably acts by disturbing membrane functions with its amphipathic structure. This Phyllomedusa bicolor (Two-colored leaf frog) protein is Dermaseptin-B1.